The primary structure comprises 251 residues: Triosephosphate isomerase (251 aa).

12–14 (NWK) serves as a coordination point for substrate. The active-site Electrophile is the histidine 98. Glutamate 168 (proton acceptor) is an active-site residue. Residues glycine 174, serine 213, and 234-235 (GG) contribute to the substrate site.

This sequence belongs to the triosephosphate isomerase family. Homodimer.

Its subcellular location is the cytoplasm. The enzyme catalyses D-glyceraldehyde 3-phosphate = dihydroxyacetone phosphate. It participates in carbohydrate biosynthesis; gluconeogenesis. The protein operates within carbohydrate degradation; glycolysis; D-glyceraldehyde 3-phosphate from glycerone phosphate: step 1/1. Its function is as follows. Involved in the gluconeogenesis. Catalyzes stereospecifically the conversion of dihydroxyacetone phosphate (DHAP) to D-glyceraldehyde-3-phosphate (G3P). This Bradyrhizobium diazoefficiens (strain JCM 10833 / BCRC 13528 / IAM 13628 / NBRC 14792 / USDA 110) protein is Triosephosphate isomerase.